Reading from the N-terminus, the 366-residue chain is Growth/differentiation factor 3 (366 aa).

The first 22 residues, 1 to 22 (MQPYQRLLALGFLLLTLPWGQT), serve as a signal peptide directing secretion. Residues 23 to 252 (SEFQDSDLLQ…HCHPSSRKRR (230 aa)) constitute a propeptide that is removed on maturation. N-linked (GlcNAc...) asparagine glycans are attached at residues Asn-113 and Asn-308. Disulfide bonds link Cys-266/Cys-331, Cys-295/Cys-363, and Cys-299/Cys-365.

It belongs to the TGF-beta family. Homodimer. Heterodimer (Potential). But, in contrast to other members of this family, cannot be disulfide-linked. Post-translationally, synthesized as large precursor molecule that undergo proteolytic cleavage, releasing the pro-domain from the active, receptor binding, C-terminal region of the molecule. Primarily in adult bone marrow, spleen, thymus and adipose tissue.

Its subcellular location is the secreted. It localises to the cytoplasm. Its function is as follows. Growth factor involved in early embryonic development and adipose-tissue homeostasis. During embryogenesis controls formation of anterior visceral endoderm and mesoderm and the establishment of anterior-posterior identity through a receptor complex comprising the receptor ACVR1B and the coreceptor CRIPTO. Regulates adipose-tissue homeostasis and energy balance under nutrient overload in part by signaling through the receptor complex based on ACVR1C and CRIPTO. This is Growth/differentiation factor 3 (Gdf3) from Mus musculus (Mouse).